Consider the following 283-residue polypeptide: Pantothenate synthetase (283 aa).

30 to 37 (MGNLHAGH) serves as a coordination point for ATP. The active-site Proton donor is the His-37. Position 61 (Gln-61) interacts with (R)-pantoate. Gln-61 provides a ligand contact to beta-alanine. 149–152 (GEKD) provides a ligand contact to ATP. Gln-155 contributes to the (R)-pantoate binding site. Residues Val-178 and 186–189 (LSSR) each bind ATP.

This sequence belongs to the pantothenate synthetase family. Homodimer.

It is found in the cytoplasm. It carries out the reaction (R)-pantoate + beta-alanine + ATP = (R)-pantothenate + AMP + diphosphate + H(+). It participates in cofactor biosynthesis; (R)-pantothenate biosynthesis; (R)-pantothenate from (R)-pantoate and beta-alanine: step 1/1. Functionally, catalyzes the condensation of pantoate with beta-alanine in an ATP-dependent reaction via a pantoyl-adenylate intermediate. The polypeptide is Pantothenate synthetase (Pseudomonas paraeruginosa (strain DSM 24068 / PA7) (Pseudomonas aeruginosa (strain PA7))).